Consider the following 1282-residue polypeptide: Clustered mitochondria protein homolog (1282 aa).

The disordered stretch occupies residues 1–50 (MADASQATTPAAEGNPVPEVPETQTPPADVNGTTEQEQTEEGAEQALEDQ). Residues 16–36 (PVPEVPETQTPPADVNGTTEQ) are compositionally biased toward low complexity. A compositionally biased stretch (acidic residues) spans 37–47 (EQTEEGAEQAL). The 245-residue stretch at 331–575 (DNTRSQETYL…RITPLDIAWM (245 aa)) folds into the Clu domain. Positions 623-650 (EEKKEGEEATEEAKTEEIKTEEAEKSEE) form a coiled coil. Composition is skewed to basic and acidic residues over residues 624 to 661 (EKKE…KTEE) and 668 to 680 (VAEK…AKED). Disordered regions lie at residues 624-680 (EKKE…AKED) and 913-945 (PVAE…TSPV). TPR repeat units lie at residues 1021 to 1054 (AQMY…AERT), 1063 to 1096 (VLNY…WKVI), and 1105 to 1138 (ITTM…CNKV). A disordered region spans residues 1257–1282 (VENSEKKKGGKKSKGPSNPKKRGGKA). Residues 1264–1282 (KGGKKSKGPSNPKKRGGKA) show a composition bias toward basic residues.

This sequence belongs to the CLU family. In terms of assembly, may associate with the eukaryotic translation initiation factor 3 (eIF-3) complex.

It is found in the cytoplasm. MRNA-binding protein involved in proper cytoplasmic distribution of mitochondria. In Neurospora crassa (strain ATCC 24698 / 74-OR23-1A / CBS 708.71 / DSM 1257 / FGSC 987), this protein is Clustered mitochondria protein homolog.